The sequence spans 1116 residues: Anillin (1116 aa).

2 stretches are compositionally biased toward basic and acidic residues: residues 1–25 and 85–94; these read MDPF…KMAD and KQPKTPELPK. Disordered regions lie at residues 1–188, 205–257, 304–363, and 443–522; these read MDPF…PVGR, DLSH…PKDT, KPNE…KVAT, and NVWT…PRLV. Residues 101-119 are compositionally biased toward polar residues; that stretch reads ASHQQLRATNQTPQVSLLS. Positions 120–133 are enriched in basic and acidic residues; sequence SDKELTASDVKDAS. Residues 142-254 are interactions with myh9 and myh10; that stretch reads LADQRRYWDN…QDTTSCSQRP (113 aa). Residues 226-242 show a composition bias toward low complexity; sequence SKESTTSSASASMNSHS. The interval 255–418 is interaction with F-actin; the sequence is KDTTVNKAVC…LKQNDISSTA (164 aa). Polar residues-rich tracts occupy residues 304 to 326 and 336 to 356; these read KPNE…SSPQ and YSYQ…VQTQ. A coiled-coil region spans residues 416-443; that stretch reads STASLAQQQKKEREKELAALRGRYDRRN. Positions 453–472 are enriched in polar residues; that stretch reads QGTFPETSSNLPTSDVASCS. A PH domain is found at 975–1099; it reads SVEDKGFLTM…WMQKLNQFLV (125 aa).

Interacts with and bundles F-actin. Interacts with the non-muscle myosin II heavy chains myh9 and myh10, and these interactions may be enhanced by the phosphorylation of myosin II regulatory light chain by mylk.

Its subcellular location is the nucleus. The protein resides in the cytoplasm. The protein localises to the cytoskeleton. It is found in the cell cortex. It localises to the cell projection. Its subcellular location is the bleb. Its function is as follows. Required for cytokinesis. Essential for the structural integrity of the cleavage furrow and for completion of cleavage furrow ingression. Plays a role in bleb assembly during metaphase and anaphase of mitosis. May play a significant role in podocyte cell migration. The sequence is that of Anillin (anln) from Xenopus laevis (African clawed frog).